The following is a 279-amino-acid chain: ESX-1 secretion-associated protein EspG1 (279 aa).

It belongs to the EspG family. Interacts specifically with ESX-1-dependent PE/PPE proteins.

It localises to the cytoplasm. In terms of biological role, specific chaperone for cognate PE/PPE proteins. Plays an important role in preventing aggregation of PE/PPE dimers. The chain is ESX-1 secretion-associated protein EspG1 from Mycobacterium marinum (strain ATCC BAA-535 / M).